A 457-amino-acid chain; its full sequence is Fibrinogen C domain-containing protein 1 (457 aa).

Residues 1–20 form a disordered region; sequence MGSDRWKNIGGAPQMEDSVQ. The Cytoplasmic segment spans residues 1 to 33; the sequence is MGSDRWKNIGGAPQMEDSVQDKSQRKGCGYILC. A helical; Signal-anchor for type II membrane protein transmembrane segment spans residues 34–54; sequence TVLLSVAVLLAVTVTGAVLFM. Residues 55-457 are Extracellular-facing; the sequence is NHYHAPSTEP…MKIRPQREEN (403 aa). The disordered stretch occupies residues 211–235; that stretch reads RPRVKADLQRAPSRSSRPRGCANGS. Positions 231-454 constitute a Fibrinogen C-terminal domain; it reads CANGSKPRDC…FTEMKIRPQR (224 aa). The N-linked (GlcNAc...) asparagine glycan is linked to Asn233. The cysteines at positions 240 and 269 are disulfide-linked. Asn336 carries an N-linked (GlcNAc...) asparagine glycan. Residues Asp389 and Asp391 each contribute to the Ca(2+) site. A disulfide bridge links Cys397 with Cys410.

As to quaternary structure, homotetramer; disulfide-linked.

The protein localises to the membrane. Its function is as follows. Acetyl group-binding receptor which shows a calcium-dependent binding to acetylated structures such as chitin, some N-acetylated carbohydrates, and amino acids. The protein is Fibrinogen C domain-containing protein 1 (fibcd1) of Xenopus tropicalis (Western clawed frog).